The following is a 765-amino-acid chain: Dipeptidyl peptidase 4 (765 aa).

At 1 to 6 (MKTPWK) the chain is on the cytoplasmic side. The chain crosses the membrane as a helical; Signal-anchor for type II membrane protein span at residues 7–29 (VLLGLLGLAALITIITVPVVLLN). The Extracellular portion of the chain corresponds to 30–765 (KGNDAAADSR…HFIKQCFSLP (736 aa)). Residues N84, N91, N149, N178, N228, N280, N320, N330, and N331 are each glycosylated (N-linked (GlcNAc...) asparagine). 3 cysteine pairs are disulfide-bonded: C384/C393, C443/C446, and C453/C471. Residue N519 is glycosylated (N-linked (GlcNAc...) asparagine). S629 acts as the Charge relay system in catalysis. An intrachain disulfide couples C648 to C761. A glycan (N-linked (GlcNAc...) asparagine) is linked at N684. Catalysis depends on charge relay system residues D707 and H739.

The protein belongs to the peptidase S9B family. DPPIV subfamily. As to quaternary structure, monomer. Homodimer. Heterodimer with Seprase (FAP). Requires homodimerization for optimal dipeptidyl peptidase activity and T-cell costimulation. Found in a membrane raft complex, at least composed of BCL10, CARD11, DPP4 and IKBKB. Associates with collagen. Interacts with PTPRC; the interaction is enhanced in an interleukin-12-dependent manner in activated lymphocytes. Interacts (extracellular domain) with ADA; does not inhibit its dipeptidyl peptidase activity. Interacts with CAV1 (via the N-terminus); the interaction is direct. Interacts (via cytoplasmic tail) with CARD11 (via PDZ domain); its homodimerization is necessary for interaction with CARD11. Interacts with IGF2R; the interaction is direct. Interacts with GPC3. Post-translationally, the soluble form (Dipeptidyl peptidase 4 soluble form also named SDPP) derives from the membrane form (Dipeptidyl peptidase 4 membrane form also named MDPP) by proteolytic processing. In terms of processing, N- and O-Glycosylated. Phosphorylated. Mannose 6-phosphate residues in the carbohydrate moiety are necessary for interaction with IGF2R in activated T-cells. Mannose 6-phosphorylation is induced during T-cell activation.

It localises to the secreted. The protein localises to the cell membrane. The protein resides in the apical cell membrane. Its subcellular location is the cell projection. It is found in the invadopodium membrane. It localises to the lamellipodium membrane. The protein localises to the cell junction. The protein resides in the membrane raft. It catalyses the reaction Release of an N-terminal dipeptide, Xaa-Yaa-|-Zaa-, from a polypeptide, preferentially when Yaa is Pro, provided Zaa is neither Pro nor hydroxyproline.. Its activity is regulated as follows. Inhibited by GPC3 and diprotin A. In terms of biological role, cell surface glycoprotein receptor involved in the costimulatory signal essential for T-cell receptor (TCR)-mediated T-cell activation. Acts as a positive regulator of T-cell coactivation, by binding at least ADA, CAV1, IGF2R, and PTPRC. Its binding to CAV1 and CARD11 induces T-cell proliferation and NF-kappa-B activation in a T-cell receptor/CD3-dependent manner. Its interaction with ADA also regulates lymphocyte-epithelial cell adhesion. In association with FAP is involved in the pericellular proteolysis of the extracellular matrix (ECM), the migration and invasion of endothelial cells into the ECM. May be involved in the promotion of lymphatic endothelial cells adhesion, migration and tube formation. When overexpressed, enhanced cell proliferation, a process inhibited by GPC3. Also acts as a serine exopeptidase with a dipeptidyl peptidase activity that regulates various physiological processes by cleaving peptides in the circulation, including many chemokines, mitogenic growth factors, neuropeptides and peptide hormones. Removes N-terminal dipeptides sequentially from polypeptides having unsubstituted N-termini provided that the penultimate residue is proline. The chain is Dipeptidyl peptidase 4 (DPP4) from Felis catus (Cat).